Consider the following 361-residue polypeptide: (S)-coclaurine N-methyltransferase (361 aa).

Positions 101, 139, 163, 167, 189, 190, and 205 each coordinate S-adenosyl-L-methionine. Cys336 is a catalytic residue.

The protein belongs to the CFA/CMAS family. Homodimer. Highly expressed in rhizomes. Detected in roots, petioles, flower buds and leaves. Expressed between the developing stele and ground tissues near the root apical meristem, in the immature endodermis, the pericycle and the spokes of developing xylem in the apical region of the root and in the protoderm of leaf primordia in rhizomes.

It is found in the cytoplasm. The catalysed reaction is norreticuline + S-adenosyl-L-methionine = reticuline + S-adenosyl-L-homocysteine + H(+). The enzyme catalyses (S)-coclaurine + S-adenosyl-L-methionine = (S)-N-methylcoclaurine + S-adenosyl-L-homocysteine + H(+). It carries out the reaction heliamine + S-adenosyl-L-methionine = N-methylheliamine + S-adenosyl-L-homocysteine + H(+). Its pathway is alkaloid biosynthesis. Involved in the biosynthesis of protoberberine alkaloids. N-methyltransferase with a substrate preference for (R,S)-norreticuline but also active with dimethoxytetrahydroisoquinoline. The protein is (S)-coclaurine N-methyltransferase of Thalictrum flavum subsp. glaucum (Yellow meadow rue).